The primary structure comprises 120 residues: NAD(P)H-quinone oxidoreductase subunit 3, chloroplastic (120 aa).

The next 3 membrane-spanning stretches (helical) occupy residues 9–29, 64–84, and 88–108; these read IFWAFLIISSAIPFLAFLISG, MFALVFVVFDVETVFLYPWAM, and VLGVSAFIEAFIFVLILILGL.

It belongs to the complex I subunit 3 family. In terms of assembly, NDH is composed of at least 16 different subunits, 5 of which are encoded in the nucleus.

It is found in the plastid. It localises to the chloroplast thylakoid membrane. It carries out the reaction a plastoquinone + NADH + (n+1) H(+)(in) = a plastoquinol + NAD(+) + n H(+)(out). The enzyme catalyses a plastoquinone + NADPH + (n+1) H(+)(in) = a plastoquinol + NADP(+) + n H(+)(out). NDH shuttles electrons from NAD(P)H:plastoquinone, via FMN and iron-sulfur (Fe-S) centers, to quinones in the photosynthetic chain and possibly in a chloroplast respiratory chain. The immediate electron acceptor for the enzyme in this species is believed to be plastoquinone. Couples the redox reaction to proton translocation, and thus conserves the redox energy in a proton gradient. The chain is NAD(P)H-quinone oxidoreductase subunit 3, chloroplastic from Aethionema cordifolium (Lebanon stonecress).